The sequence spans 425 residues: 5'-deoxyadenosine deaminase (425 aa).

Zn(2+) contacts are provided by H62 and H64. Positions 91 and 183 each coordinate substrate. H210 provides a ligand contact to Zn(2+). 2 residues coordinate substrate: E213 and D298. Residue D298 coordinates Zn(2+).

It belongs to the metallo-dependent hydrolases superfamily. MTA/SAH deaminase family. Homotetramer. Zn(2+) is required as a cofactor.

It carries out the reaction 5'-deoxyadenosine + H2O + H(+) = 5'-deoxyinosine + NH4(+). The catalysed reaction is S-adenosyl-L-homocysteine + H2O + H(+) = S-inosyl-L-homocysteine + NH4(+). The enzyme catalyses S-methyl-5'-thioadenosine + H2O + H(+) = S-methyl-5'-thioinosine + NH4(+). It catalyses the reaction adenosine + H2O + H(+) = inosine + NH4(+). It functions in the pathway amino-acid biosynthesis; S-adenosyl-L-methionine biosynthesis. Functionally, catalyzes the deamination of three SAM-derived enzymatic products, namely 5'-deoxyadenosine, S-adenosyl-L-homocysteine, and 5'-methylthioadenosine, to produce the inosine analogs. Can also deaminate adenosine. The preferred substrate for this enzyme is 5'-deoxyadenosine, but all these substrates are efficiently deaminated. Likely functions in a S-adenosyl-L-methionine (SAM) recycling pathway from S-adenosyl-L-homocysteine (SAH) produced from SAM-dependent methylation reactions. May also be involved in the recycling of 5'-deoxyadenosine, whereupon the 5'-deoxyribose moiety of 5'-deoxyinosine is further metabolized to deoxyhexoses used for the biosynthesis of aromatic amino acids in methanogens. The polypeptide is 5'-deoxyadenosine deaminase (Methanosphaera stadtmanae (strain ATCC 43021 / DSM 3091 / JCM 11832 / MCB-3)).